Reading from the N-terminus, the 393-residue chain is Probable acetyl-CoA acyltransferase (393 aa).

The active-site Acyl-thioester intermediate is the Cys-88. Residues His-349 and Cys-378 each act as proton acceptor in the active site.

The protein belongs to the thiolase-like superfamily. Thiolase family.

The protein resides in the cytoplasm. It carries out the reaction 2 acetyl-CoA = acetoacetyl-CoA + CoA. This is Probable acetyl-CoA acyltransferase from Staphylococcus aureus (strain MRSA252).